Here is a 149-residue protein sequence, read N- to C-terminus: Deoxyuridine 5'-triphosphate nucleotidohydrolase (149 aa).

Substrate is bound by residues 68 to 70, asparagine 81, 85 to 87, and methionine 95; these read RSG and LID.

It belongs to the dUTPase family. Mg(2+) serves as cofactor.

The enzyme catalyses dUTP + H2O = dUMP + diphosphate + H(+). It functions in the pathway pyrimidine metabolism; dUMP biosynthesis; dUMP from dCTP (dUTP route): step 2/2. Functionally, this enzyme is involved in nucleotide metabolism: it produces dUMP, the immediate precursor of thymidine nucleotides and it decreases the intracellular concentration of dUTP so that uracil cannot be incorporated into DNA. This is Deoxyuridine 5'-triphosphate nucleotidohydrolase from Bordetella bronchiseptica (strain ATCC BAA-588 / NCTC 13252 / RB50) (Alcaligenes bronchisepticus).